Here is a 102-residue protein sequence, read N- to C-terminus: Large ribosomal subunit protein uL24 (102 aa).

This sequence belongs to the universal ribosomal protein uL24 family. As to quaternary structure, part of the 50S ribosomal subunit.

In terms of biological role, one of two assembly initiator proteins, it binds directly to the 5'-end of the 23S rRNA, where it nucleates assembly of the 50S subunit. Functionally, one of the proteins that surrounds the polypeptide exit tunnel on the outside of the subunit. This Rhizobium leguminosarum bv. trifolii (strain WSM2304) protein is Large ribosomal subunit protein uL24.